The following is a 496-amino-acid chain: Protein TOO MANY MOUTHS (496 aa).

A signal peptide spans 1–23; the sequence is MARYEFFRQIFIVLSIVSPLVRS. Residues 24–473 are Extracellular-facing; that stretch reads FTVITSDSTA…ATDVSSTSKS (450 aa). LRR repeat units follow at residues 158 to 182, 183 to 208, 210 to 228, 229 to 252, 254 to 276, 277 to 300, 302 to 325, 326 to 350, 351 to 373, and 375 to 401; these read GSSL…LGNL, TNLK…RFSG, RSLD…GFVL, PALS…LTSC, SLIK…INRL, NQLV…LQGL, SLQA…AFKG, LKNL…LTRL, NSLR…EFRD, and KHLS…VWRM. N-linked (GlcNAc...) asparagine glycosylation is found at Asn-181 and Asn-196. Residue Asn-362 is glycosylated (N-linked (GlcNAc...) asparagine). Residues 438-464 form a disordered region; the sequence is AETSRPAPSGTVQHLSREEDGALPDGA. The helical transmembrane segment at 474–494 threads the bilayer; that stretch reads LGFSYLSAFFLVFPNFIFMLI. Topologically, residues 495–496 are cytoplasmic; it reads SS.

This sequence belongs to the RLP family. Forms heterodimer with ERECTA or ERL1 through their extracellular domains. Not able to form homodimer. Interacts with EPF2 but not with EPF1. Interacts with SERK1, SERK2, SERK3/BAK1 and SERK4. Interacts with EPFL9/STOMAGEN. In terms of tissue distribution, in epidermal cells of developing shoots and leaves, but not in roots. Expressed in the stomatal cell lineage in the developing epidermis. Accumulates strongly in meristemoid mother cells (MMC) and meristemoids, somewhat less in meristemoid sister cells (stomatal-lineage ground cells, SLGC), and is barely detected in pavement cells.

The protein localises to the cell membrane. Functionally, promotes cell fate progression in stomatal development. In leaves, needed to correctly orient spacing divisions, to limit the number of asymmetric divisions in neighbor cells, and to promote the asymmetric (amplifying) divisions of meristemoids. In stems, promotes the conversion of meristemoids into guard mother cells (GMC). Positively regulates CAPRICE (CPC) expression in differentiating stomaless-forming cell files. Forms constitutive complexes with ERECTA and ERL1 involved in the recognition of the stomatal regulatory peptides EPF1, EPF2 and EPFL9/STOMAGEN. Modulates the activity of the ligand-receptor pairs EPF2-ERECTA and EPF1-ERL1 in stomatal development. Functions in a combinatorial specific manner with the ERECTA-family (ERf) receptor kinases in the regulation of the immune response. This Arabidopsis thaliana (Mouse-ear cress) protein is Protein TOO MANY MOUTHS.